A 480-amino-acid polypeptide reads, in one-letter code: Glycerol-3-phosphate transporter (480 aa).

The Cytoplasmic segment spans residues 1–36 (MFGPFKPAPHIAELPAEKIDSTYKRLRWQVFAGIFF). Residues 37–57 (GYAAYYFVRANFDLAQPGLIQ) form a helical membrane-spanning segment. Over 58 to 64 (AGLYSKA) the chain is Periplasmic. The chain crosses the membrane as a helical span at residues 65–85 (ELGVIGSAAGLAYGLSKFVMA). At 86 to 94 (GMSDRSNPR) the chain is on the cytoplasmic side. A helical membrane pass occupies residues 95–113 (VFLPFGLLLSGLCMTLMGL). Residues 114-121 (FPWATSGI) lie on the Periplasmic side of the membrane. A helical membrane pass occupies residues 122-142 (AIMWVMIFLNGWFQGMGWPPC). Residues 143-161 (GRTMVHWWSKSERGTIVSI) are Cytoplasmic-facing. The chain crosses the membrane as a helical span at residues 162–181 (WNTAHNIGGMVPGAMVLLAS). At 182-201 (AIFFSTHGIEAQAKDVWQQS) the chain is on the periplasmic side. The helical transmembrane segment at 202-219 (LYFPGIAAMIFAIPVYFV) threads the bilayer. The Cytoplasmic portion of the chain corresponds to 220-274 (MRDTPQSCGLPSIEKWRNDYPDDYNEKTYENDLTAKEIFVTYVLKNKLLWYIAIA). A helical transmembrane segment spans residues 275-295 (NVFVYLIRYGVLKWSPVYLSE). Residues 296-300 (VKHFN) lie on the Periplasmic side of the membrane. A helical transmembrane segment spans residues 301–321 (IKGTAWAYTIYELAAVPGTLL). Over 322–334 (CGWVSDKVFKGKR) the chain is Cytoplasmic. Residues 335–354 (GLTGFIFMILTTAAVVAYWM) form a helical membrane-spanning segment. Residues 355–359 (NPATP) lie on the Periplasmic side of the membrane. The chain crosses the membrane as a helical span at residues 360–396 (EAELANYSAWYENPYQLTDFVLMTLIGFLIYGPVMLI). Topologically, residues 397-415 (GLHALELAPKKAAGTAAGF) are cytoplasmic. The helical transmembrane segment at 416–437 (TGLFGYLGGTVSASAVIGWAAQ) threads the bilayer. The Periplasmic segment spans residues 438–442 (HYGWD). The chain crosses the membrane as a helical span at residues 443–463 (GGFYVMIGGGVLAVLLLLIVM). Residues 464 to 479 (VEEGKHKAKLGDTYGT) lie on the Cytoplasmic side of the membrane.

It belongs to the major facilitator superfamily. Organophosphate:Pi antiporter (OPA) (TC 2.A.1.4) family.

Its subcellular location is the cell inner membrane. In terms of biological role, responsible for glycerol-3-phosphate uptake. This chain is Glycerol-3-phosphate transporter (glpT), found in Haemophilus influenzae (strain ATCC 51907 / DSM 11121 / KW20 / Rd).